A 358-amino-acid polypeptide reads, in one-letter code: Glutamate 5-kinase (358 aa).

Lys9 is an ATP binding site. Residues Ser49, Asp136, and Asn148 each contribute to the substrate site. Residues 168 to 169 (TD) and 210 to 216 (TGGMTTK) contribute to the ATP site. One can recognise a PUA domain in the interval 275–353 (DAAVEVDAGA…RAEGVLIHRN (79 aa)).

Belongs to the glutamate 5-kinase family.

The protein resides in the cytoplasm. It catalyses the reaction L-glutamate + ATP = L-glutamyl 5-phosphate + ADP. The protein operates within amino-acid biosynthesis; L-proline biosynthesis; L-glutamate 5-semialdehyde from L-glutamate: step 1/2. Catalyzes the transfer of a phosphate group to glutamate to form L-glutamate 5-phosphate. The sequence is that of Glutamate 5-kinase from Streptococcus suis (strain 05ZYH33).